The following is an 82-amino-acid chain: UPF0213 protein SERP0126 (82 aa).

A GIY-YIG domain is found at 2-77 (DKHFVYIVKC…KTYTRQQKLK (76 aa)).

The protein belongs to the UPF0213 family.

This Staphylococcus epidermidis (strain ATCC 35984 / DSM 28319 / BCRC 17069 / CCUG 31568 / BM 3577 / RP62A) protein is UPF0213 protein SERP0126.